Reading from the N-terminus, the 799-residue chain is Protein translocase subunit SecA 1 (799 aa).

ATP contacts are provided by residues glutamine 85, 103-107 (GEGKT), and aspartate 504.

It belongs to the SecA family. Monomer and homodimer. Part of the essential Sec protein translocation apparatus which comprises SecA, SecYEG and auxiliary proteins SecDF. Other proteins may also be involved.

It is found in the cell membrane. The protein resides in the cytoplasm. It catalyses the reaction ATP + H2O + cellular proteinSide 1 = ADP + phosphate + cellular proteinSide 2.. Its function is as follows. Part of the Sec protein translocase complex. Interacts with the SecYEG preprotein conducting channel. Has a central role in coupling the hydrolysis of ATP to the transfer of proteins into and across the cell membrane, serving as an ATP-driven molecular motor driving the stepwise translocation of polypeptide chains across the membrane. The sequence is that of Protein translocase subunit SecA 1 from Lactobacillus johnsonii (strain CNCM I-12250 / La1 / NCC 533).